Reading from the N-terminus, the 695-residue chain is Threonine--tRNA ligase (695 aa).

Positions 6 to 75 constitute a TGS domain; that stretch reads SAIFVNTTDT…ETTATFTAVP (70 aa). Positions 274 to 580 are catalytic; that stretch reads DHRRLGTELD…LLEHYAGAFP (307 aa). Residues C379, H430, and H557 each contribute to the Zn(2+) site.

The protein belongs to the class-II aminoacyl-tRNA synthetase family. Homodimer. Requires Zn(2+) as cofactor.

The protein localises to the cytoplasm. The enzyme catalyses tRNA(Thr) + L-threonine + ATP = L-threonyl-tRNA(Thr) + AMP + diphosphate + H(+). In terms of biological role, catalyzes the attachment of threonine to tRNA(Thr) in a two-step reaction: L-threonine is first activated by ATP to form Thr-AMP and then transferred to the acceptor end of tRNA(Thr). Also edits incorrectly charged L-seryl-tRNA(Thr). This Corynebacterium glutamicum (strain ATCC 13032 / DSM 20300 / JCM 1318 / BCRC 11384 / CCUG 27702 / LMG 3730 / NBRC 12168 / NCIMB 10025 / NRRL B-2784 / 534) protein is Threonine--tRNA ligase.